The chain runs to 1237 residues: MGGALGPALLLTSLLGAWARLGAGQGEQAVTVAVVFGSSGPLQTQARTRLTSQNFLDLPLEIQPLTVGVNNTNPSSILTQICGLLGAARVHGIVFEDNVDTEAVAQLLDFVSSQTHVPILSISGGSAVVLTPKEPGSAFLQLGVSLEQQLQVLFKVLEEYDWSAFAVITSLHPGHALFLEGVRAVADASYLSWRLLDVLTLELGPGGPRARTQRLLRQVDAPVLVAYCSREEAEVLFAEAAQAGLVGPGHVWLVPNLALGSTDAPPAAFPVGLISVVTESWRLSLRQKVRDGVAILALGAHSYRRQYGTLPAPAGDCRSHPGPVSPAREAFYRHLLNVTWEGRDFSFSPGGYLVRPTMVVIALNRHRLWEMVGRWDHGVLYMKYPVWPRYSTSLQPVVDSRHLTVATLEERPFVIVESPDPGTGGCVPNTVPCRRQSNHTFSSGDLTPYTKLCCKGFCIDILKKLAKVVKFSYDLYLVTNGKHGKRVRGVWNGMIGEVYYKRADMAIGSLTINEERSEIIDFSVPFVETGISVMVSRSNGTVSPSAFLEPYSPAVWVMMFVMCLTVVAITVFMFEYFSPVSYNQNLTKGKKPGGPSFTIGKSVWLLWALVFNNSVPIENPRGTTSKIMVLVWAFFAVIFLASYTANLAAFMIQEQYIDTVSGLSDKKFQRPQDQYPPFRFGTVPNGSTERNIRSNYRDMHTHMVKFNQRSVEDALTSLKMGKLDAFIYDAAVLNYMAGKDEGCKLVTIGSGKVFATTGYGIAMQKDSHWKRAIDLALLQLLGDGETQKLETVWLSGICQNEKNEVMSSKLDIDNMAGVFYMLLVAMGLALLVFAWEHLVYWKLRHSVPNSSQLDFLLAFSRGIYSCFNGVQSLPSPARPPSPDLTADSAQANVLKMLQAARDMVNTADVSSSLDRATRTIENWGNNRRVPAPTASGPRSSTPGPPGQPSPSGWGPPGGGRTPLARRAPQPPARPATCGPPLPDVSRPSCRHASDARWPVRVGHQGPHVSASERRALPERSLLPAHCHYSSFPRAERSGRPYLPLFPEPPEPDDLPLLGPEQLARREAMLRAAWARGPRPRHASLPSSVAEAFTRSNPLPARCTGHACACPCPQSRPSCRHLAQAQSLRLPSYPEACVEGVPAGVATWQPRQHVCLHAHTRLPFCWGTVCRHPPPCTSHSPWLIGTWEPPAHRVRTLGLGTGYRDSGVLEEVSREACGTQGFPRSCTWRRVSSLESEV.

An N-terminal signal peptide occupies residues 1–19 (MGGALGPALLLTSLLGAWA). Residues 20–554 (RLGAGQGEQA…SAFLEPYSPA (535 aa)) lie on the Extracellular side of the membrane. N-linked (GlcNAc...) asparagine glycosylation is found at Asn-70 and Asn-73. A disulfide bond links Cys-82 and Cys-317. Asn-337 and Asn-438 each carry an N-linked (GlcNAc...) asparagine glycan. 2 disulfide bridges follow: Cys-426–Cys-453 and Cys-433–Cys-454. Positions 509, 511, and 516 each coordinate L-glutamate. An N-linked (GlcNAc...) asparagine glycan is attached at Asn-539. Residues 555–575 (VWVMMFVMCLTVVAITVFMFE) traverse the membrane as a helical segment. Over 576–601 (YFSPVSYNQNLTKGKKPGGPSFTIGK) the chain is Cytoplasmic. A pore-forming region spans residues 601–620 (KSVWLLWALVFNNSVPIENP). The discontinuously helical intramembrane region spans 602–611 (SVWLLWALVF). Topologically, residues 612–622 (NNSVPIENPRG) are cytoplasmic. A helical membrane pass occupies residues 623 to 644 (TTSKIMVLVWAFFAVIFLASYT). The Extracellular segment spans residues 645 to 813 (ANLAAFMIQE…EVMSSKLDID (169 aa)). Asn-685 carries an N-linked (GlcNAc...) asparagine glycan. The L-glutamate site is built by Ser-687, Thr-688, and Asp-729. Cys-743 and Cys-798 are joined by a disulfide. The chain crosses the membrane as a helical span at residues 814 to 833 (NMAGVFYMLLVAMGLALLVF). The Cytoplasmic portion of the chain corresponds to 834–1237 (AWEHLVYWKL…RRVSSLESEV (404 aa)). A phosphoserine mark is found at Ser-875, Ser-881, and Ser-912. The span at 907 to 925 (ADVSSSLDRATRTIENWGN) shows a compositional bias: polar residues. A disordered region spans residues 907-990 (ADVSSSLDRA…LPDVSRPSCR (84 aa)). Positions 930–941 (PAPTASGPRSST) are enriched in low complexity. Residues 968–982 (PQPPARPATCGPPLP) are compositionally biased toward pro residues. The PDZ-binding motif lies at 1235-1237 (SEV).

It belongs to the glutamate-gated ion channel (TC 1.A.10.1) family. NR2C/GRIN2C subfamily. As to quaternary structure, heterotetramer. Forms heterotetrameric channels composed of two GluN1/zeta subunits (GRIN1), and two identical GluN2/epsilon subunits (GRIN2A, GRIN2B, GRIN2C or GRIN2D) or GluN3 subunits (GRIN3A or GRIN3B) (in vitro). In vivo, the subunit composition may depend on the expression levels of the different subunits. Interacts with PDZ domains of PATJ and DLG4. Interacts (via PDZ-binding motif) with SNX27 (via PDZ domain); the interaction is required for recycling to the plasma membrane when endocytosed and prevent degradation in lysosomes. Detected in cerebellum.

Its subcellular location is the cell membrane. It is found in the postsynaptic cell membrane. It carries out the reaction Ca(2+)(in) = Ca(2+)(out). It catalyses the reaction Na(+)(in) = Na(+)(out). The catalysed reaction is K(+)(in) = K(+)(out). Functionally, component of N-methyl-D-aspartate (NMDA) receptors (NMDARs) that function as heterotetrameric, ligand-gated cation channels with high calcium permeability and voltage-dependent block by Mg(2+). Participates in synaptic plasticity for learning and memory formation by contributing to the slow phase of excitatory postsynaptic current and long-term synaptic potentiation. Channel activation requires binding of the neurotransmitter L-glutamate to the GluN2 subunit, glycine or D-serine binding to the GluN1 subunit, plus membrane depolarization to eliminate channel inhibition by Mg(2+). NMDARs mediate simultaneously the potasium efflux and the influx of calcium and sodium. Each GluN2 subunit confers differential attributes to channel properties, including activation, deactivation and desensitization kinetics, pH sensitivity, Ca2(+) permeability, and binding to allosteric modulators. This is Glutamate receptor ionotropic, NMDA 2C from Rattus norvegicus (Rat).